We begin with the raw amino-acid sequence, 109 residues long: Peptide chaperone MftB (109 aa).

It belongs to the peptide chaperone MftB family. In terms of assembly, interacts with MftA and MftC.

Its function is as follows. Peptide chaperone involved in the biosynthesis of the enzyme cofactor mycofactocin (MFT). Binds MftA and MftC with high affinity, and is essential for MftC activity on MftA, likely via the formation of a ternary complex. The protein is Peptide chaperone MftB of Mycobacterium ulcerans (strain Agy99).